The primary structure comprises 507 residues: NAD(P)H-quinone oxidoreductase chain 4, chloroplastic (507 aa).

14 helical membrane-spanning segments follow: residues 4-24, 34-54, 87-107, 111-131, 134-154, 167-187, 210-230, 241-261, 273-293, 312-332, 333-353, 383-403, 416-436, and 462-482; these read FPWITSIVMLPILAGLLIPFI, WYALGIGLLDFLLISYIFGYK, IPLILLTGFITTLAMLGAWPI, AKLFYFLMLAMYSGQLGVFAS, LLLFFLMWELELIPIYILLII, FILYTALGSIFILIAAFGMAF, ILFYICFLIAYAVKLPAFPVH, HYSTCMLLAGILLKMGGYALI, IYFAPYLAIIGVINIIYAALT, MGFVLIGISSFTDIGLSGAML, QMVSHGLIGASLFFLAGTTYD, ASLALPGMSGFVAELMVFLGF, IITFLEAIGIIVTPIYLLSML, and IFIISCLLVPVIGIGIYPRIL.

The protein belongs to the complex I subunit 4 family.

Its subcellular location is the plastid. The protein localises to the chloroplast thylakoid membrane. The enzyme catalyses a plastoquinone + NADH + (n+1) H(+)(in) = a plastoquinol + NAD(+) + n H(+)(out). It carries out the reaction a plastoquinone + NADPH + (n+1) H(+)(in) = a plastoquinol + NADP(+) + n H(+)(out). The chain is NAD(P)H-quinone oxidoreductase chain 4, chloroplastic (ndhD) from Mesostigma viride (Green alga).